The primary structure comprises 285 residues: Octanoyltransferase (285 aa).

The BPL/LPL catalytic domain maps to 50–277; that stretch reads LRTPDELWIV…NIAQRHAGDI (228 aa). Substrate is bound by residues 89–96, 189–191, and 202–204; these read RGGQVTWH, SLG, and GIA. Catalysis depends on Cys-220, which acts as the Acyl-thioester intermediate.

Belongs to the LipB family.

It is found in the cytoplasm. It catalyses the reaction octanoyl-[ACP] + L-lysyl-[protein] = N(6)-octanoyl-L-lysyl-[protein] + holo-[ACP] + H(+). Its pathway is protein modification; protein lipoylation via endogenous pathway; protein N(6)-(lipoyl)lysine from octanoyl-[acyl-carrier-protein]: step 1/2. Catalyzes the transfer of endogenously produced octanoic acid from octanoyl-acyl-carrier-protein onto the lipoyl domains of lipoate-dependent enzymes. Lipoyl-ACP can also act as a substrate although octanoyl-ACP is likely to be the physiological substrate. The chain is Octanoyltransferase from Psychrobacter cryohalolentis (strain ATCC BAA-1226 / DSM 17306 / VKM B-2378 / K5).